A 2281-amino-acid polypeptide reads, in one-letter code: Protein Ycf2 (2281 aa).

1634 to 1641 (GSIGTGRS) serves as a coordination point for ATP.

It belongs to the Ycf2 family.

It localises to the plastid. The protein localises to the chloroplast stroma. Its function is as follows. Probable ATPase of unknown function. Its presence in a non-photosynthetic plant (Epifagus virginiana) and experiments in tobacco indicate that it has an essential function which is probably not related to photosynthesis. The protein is Protein Ycf2 of Buxus microphylla (Littleleaf boxwood).